We begin with the raw amino-acid sequence, 143 residues long: Large ribosomal subunit protein uL13 (143 aa).

This sequence belongs to the universal ribosomal protein uL13 family. As to quaternary structure, part of the 50S ribosomal subunit.

In terms of biological role, this protein is one of the early assembly proteins of the 50S ribosomal subunit, although it is not seen to bind rRNA by itself. It is important during the early stages of 50S assembly. This Coprothermobacter proteolyticus (strain ATCC 35245 / DSM 5265 / OCM 4 / BT) protein is Large ribosomal subunit protein uL13.